The primary structure comprises 149 residues: D-aminoacyl-tRNA deacylase (149 aa).

The Gly-cisPro motif, important for rejection of L-amino acids signature appears at glycine 137–proline 138.

Belongs to the DTD family. In terms of assembly, homodimer.

It is found in the cytoplasm. The catalysed reaction is glycyl-tRNA(Ala) + H2O = tRNA(Ala) + glycine + H(+). It carries out the reaction a D-aminoacyl-tRNA + H2O = a tRNA + a D-alpha-amino acid + H(+). Functionally, an aminoacyl-tRNA editing enzyme that deacylates mischarged D-aminoacyl-tRNAs. Also deacylates mischarged glycyl-tRNA(Ala), protecting cells against glycine mischarging by AlaRS. Acts via tRNA-based rather than protein-based catalysis; rejects L-amino acids rather than detecting D-amino acids in the active site. By recycling D-aminoacyl-tRNA to D-amino acids and free tRNA molecules, this enzyme counteracts the toxicity associated with the formation of D-aminoacyl-tRNA entities in vivo and helps enforce protein L-homochirality. The chain is D-aminoacyl-tRNA deacylase from Clostridium acetobutylicum (strain ATCC 824 / DSM 792 / JCM 1419 / IAM 19013 / LMG 5710 / NBRC 13948 / NRRL B-527 / VKM B-1787 / 2291 / W).